The sequence spans 77 residues: Putative antitoxin VapB24 (77 aa).

Its function is as follows. Possibly the antitoxin component of a type II toxin-antitoxin (TA) system. Its cognate toxin is VapC24 (Potential). The polypeptide is Putative antitoxin VapB24 (vapB24) (Mycobacterium tuberculosis (strain CDC 1551 / Oshkosh)).